We begin with the raw amino-acid sequence, 429 residues long: Histidinol dehydrogenase (429 aa).

The NAD(+) site is built by Y130, Q191, and N214. Positions 237, 259, and 262 each coordinate substrate. 2 residues coordinate Zn(2+): Q259 and H262. Residues E327 and H328 each act as proton acceptor in the active site. Substrate-binding residues include H328, D361, E415, and H420. Zn(2+) is bound at residue D361. Residue H420 participates in Zn(2+) binding.

Belongs to the histidinol dehydrogenase family. It depends on Zn(2+) as a cofactor.

It carries out the reaction L-histidinol + 2 NAD(+) + H2O = L-histidine + 2 NADH + 3 H(+). Its pathway is amino-acid biosynthesis; L-histidine biosynthesis; L-histidine from 5-phospho-alpha-D-ribose 1-diphosphate: step 9/9. In terms of biological role, catalyzes the sequential NAD-dependent oxidations of L-histidinol to L-histidinaldehyde and then to L-histidine. The protein is Histidinol dehydrogenase of Neisseria meningitidis serogroup B (strain ATCC BAA-335 / MC58).